The sequence spans 455 residues: Glutamyl-tRNA reductase (455 aa).

Substrate is bound by residues 49 to 52 (TCNR), Ser-109, 114 to 116 (EAQ), and Gln-120. The Nucleophile role is filled by Cys-50. 190–195 (GAGAMG) is a binding site for NADP(+).

This sequence belongs to the glutamyl-tRNA reductase family. As to quaternary structure, homodimer.

It carries out the reaction (S)-4-amino-5-oxopentanoate + tRNA(Glu) + NADP(+) = L-glutamyl-tRNA(Glu) + NADPH + H(+). It functions in the pathway porphyrin-containing compound metabolism; protoporphyrin-IX biosynthesis; 5-aminolevulinate from L-glutamyl-tRNA(Glu): step 1/2. In terms of biological role, catalyzes the NADPH-dependent reduction of glutamyl-tRNA(Glu) to glutamate 1-semialdehyde (GSA). This is Glutamyl-tRNA reductase from Salinispora arenicola (strain CNS-205).